Here is a 295-residue protein sequence, read N- to C-terminus: Ribosomal protein L11 methyltransferase (295 aa).

Positions 146, 167, 189, and 231 each coordinate S-adenosyl-L-methionine.

This sequence belongs to the methyltransferase superfamily. PrmA family.

It is found in the cytoplasm. The catalysed reaction is L-lysyl-[protein] + 3 S-adenosyl-L-methionine = N(6),N(6),N(6)-trimethyl-L-lysyl-[protein] + 3 S-adenosyl-L-homocysteine + 3 H(+). Functionally, methylates ribosomal protein L11. The chain is Ribosomal protein L11 methyltransferase from Vibrio cholerae serotype O1 (strain ATCC 39541 / Classical Ogawa 395 / O395).